The primary structure comprises 394 residues: Na(+)/H(+) antiporter NhaA 2 (394 aa).

11 helical membrane passes run 13–33 (FGGV…NGFL), 58–78 (LILW…GLEL), 93–113 (IALP…IFWA), 124–144 (GWAI…MLLG), 153–173 (IFLL…IAIF), 176–196 (TKLS…LWVL), 208–228 (ILVT…ATIA), 260–280 (YFIL…GVQI), 291–311 (IFFG…YIFI), 327–347 (FYGV…VNSL), and 361–381 (LGIL…LLVF).

It belongs to the NhaA Na(+)/H(+) (TC 2.A.33) antiporter family.

Its subcellular location is the cell inner membrane. The catalysed reaction is Na(+)(in) + 2 H(+)(out) = Na(+)(out) + 2 H(+)(in). In terms of biological role, na(+)/H(+) antiporter that extrudes sodium in exchange for external protons. The polypeptide is Na(+)/H(+) antiporter NhaA 2 (Campylobacter fetus subsp. fetus (strain 82-40)).